Consider the following 482-residue polypeptide: Pre-glycoprotein polyprotein GP complex (482 aa).

The N-myristoyl glycine; by host moiety is linked to residue Gly-2. Residues 2–17 lie on the Extracellular side of the membrane; that stretch reads GQFISFMQEIPIFLQE. A helical transmembrane segment spans residues 18–32; the sequence is ALNIALVAVSLICIV. Lys-33 is a topological domain (cytoplasmic). The helical transmembrane segment at 34 to 53 threads the bilayer; it reads GLVNLYRCGLFQLMVFLVLA. Extracellular-side segments run 54–58 and 59–421; these read GRSCS and EETF…TLVD. Zn(2+) is bound at residue Cys-57. N-linked (GlcNAc...) asparagine; by host glycosylation is found at Asn-83 and Asn-95. 5 disulfides stabilise this stretch: Cys-92-Cys-224, Cys-134-Cys-162, Cys-205-Cys-211, Cys-269-Cys-282, and Cys-353-Cys-374. N-linked (GlcNAc...) asparagine; by host glycosylation is found at Asn-164 and Asn-176. N-linked (GlcNAc...) asparagine; by host glycans are attached at residues Asn-354, Asn-362, Asn-379, and Asn-384. A helical membrane pass occupies residues 422 to 442; that stretch reads ICFWSTEFFISTLFLHLIGFP. The Cytoplasmic segment spans residues 443 to 482; it reads THEHIRGEGCPLPHRLNSMGGCRCGKYLPLKKPTIWHRRH. Zn(2+) contacts are provided by His-444, His-446, Cys-452, His-456, Cys-464, Cys-466, and His-482.

Belongs to the arenaviridae GPC protein family. Homotetramer; disulfide-linked. As to quaternary structure, homotetramer. GP2 homotetramers bind through ionic interactions with GP1 homotetramers to form the GP complex together with the stable signal peptide. The GP-C polyprotein interacts with the host protease MBTPS1/SKI-1 resulting in the polyprotein processing. Specific enzymatic cleavages in vivo yield mature proteins. GP-C polyprotein is cleaved in the endoplasmic reticulum by the host protease MBTPS1. Only cleaved glycoprotein is incorporated into virions. Post-translationally, the SSP remains stably associated with the GP complex following cleavage by signal peptidase and plays crucial roles in the trafficking of GP through the secretory pathway. In terms of processing, myristoylation is necessary for GP2-mediated fusion activity.

Its subcellular location is the virion membrane. It is found in the host endoplasmic reticulum membrane. It localises to the host Golgi apparatus membrane. The protein localises to the host cell membrane. Functionally, class I viral fusion protein that directs fusion of viral and host endosomal membranes, leading to delivery of the nucleocapsid into the cytoplasm. Membrane fusion is mediated by irreversible conformational changes induced upon acidification in the endosome. Its function is as follows. Stable signal peptide (SSP): cleaved and functions as a signal peptide. In addition, it is also retained as the third component of the GP complex. The SSP is required for efficient glycoprotein expression, post-translational maturation cleavage of GP1 and GP2, glycoprotein transport to the cell surface plasma membrane, formation of infectious virus particles, and acid pH-dependent glycoprotein-mediated cell fusion. Interacts with the host receptor. The chain is Pre-glycoprotein polyprotein GP complex from Artibeus (neotropical fruit bats).